The sequence spans 917 residues: Smoothelin (917 aa).

Position 2 is an N-acetylalanine (alanine 2). A coiled-coil region spans residues 24–89; the sequence is LAERRRIRSA…ARLAGQLESM (66 aa). A disordered region spans residues 157–456; sequence EVPEREEQEQ…AVGTAEPGGS (300 aa). Residues 177-188 are compositionally biased toward polar residues; the sequence is PEGTSQDVTTVT. Composition is skewed to low complexity over residues 193 to 210 and 220 to 232; these read APPGSTSSSPASPSSSPT and PAEAQCLTAEVPG. Residues 233–243 show a composition bias toward pro residues; the sequence is SPEPPPSPPKT. Residues 244–258 are compositionally biased toward low complexity; the sequence is TSPEPQESPTLPSTE. Positions 298–326 are enriched in polar residues; it reads RSLSVLSPRQPAQNRESTPLASGPSSFQR. Serine 299, serine 301, and serine 304 each carry phosphoserine. Residues 329 to 338 show a composition bias toward basic and acidic residues; that stretch reads SVRDRVHKFT. Serine 341 is modified (phosphoserine). Threonine 351 bears the Phosphothreonine mark. Serine 357 is modified (phosphoserine). Phosphothreonine is present on residues threonine 360 and threonine 373. Over residues 363-392 the composition is skewed to low complexity; that stretch reads RLLGPSLTSTTPASSSSGSSSRGPSDTSSR. A phosphoserine mark is found at serine 503, serine 514, serine 523, and serine 576. Disordered stretches follow at residues 560-580 and 617-767; these read ANGAEQTRVNKAPEGRSPLSA and QRKR…RKAM. Residues 603 to 630 adopt a coiled-coil conformation; sequence EERKLIRAALRELRQRKRDQRDKERERR. Basic and acidic residues predominate over residues 617–640; that stretch reads QRKRDQRDKERERRLQEARGRPGE. A compositionally biased stretch (polar residues) spans 676–689; the sequence is NDGTRTARTTTVES. Over residues 701–720 the composition is skewed to low complexity; the sequence is STMMQTKTFSSSSSSKKMGS. Position 729 is a phosphoserine (serine 729). Over residues 738 to 750 the composition is skewed to basic and acidic residues; the sequence is LEKRQAEKKKELM. Phosphoserine is present on serine 792. One can recognise a Calponin-homology (CH) domain in the interval 799-906; the sequence is NSIKQMLLDW…YVQSLYNHLR (108 aa).

It belongs to the smoothelin family. Smooth muscle; contractile or vascular (for the long form).

It localises to the cytoplasm. Its subcellular location is the cytoskeleton. Its function is as follows. Structural protein of the cytoskeleton. The polypeptide is Smoothelin (SMTN) (Homo sapiens (Human)).